We begin with the raw amino-acid sequence, 196 residues long: ATP-dependent Clp protease proteolytic subunit 1 (196 aa).

Catalysis depends on S96, which acts as the Nucleophile. H121 is a catalytic residue.

It belongs to the peptidase S14 family. Fourteen ClpP subunits assemble into 2 heptameric rings which stack back to back to give a disk-like structure with a central cavity, resembling the structure of eukaryotic proteasomes.

It localises to the cytoplasm. It carries out the reaction Hydrolysis of proteins to small peptides in the presence of ATP and magnesium. alpha-casein is the usual test substrate. In the absence of ATP, only oligopeptides shorter than five residues are hydrolyzed (such as succinyl-Leu-Tyr-|-NHMec, and Leu-Tyr-Leu-|-Tyr-Trp, in which cleavage of the -Tyr-|-Leu- and -Tyr-|-Trp bonds also occurs).. Its function is as follows. Cleaves peptides in various proteins in a process that requires ATP hydrolysis. Has a chymotrypsin-like activity. Plays a major role in the degradation of misfolded proteins. This is ATP-dependent Clp protease proteolytic subunit 1 from Prochlorococcus marinus (strain SARG / CCMP1375 / SS120).